The sequence spans 177 residues: Ribosome maturation factor RimM (177 aa).

Positions 101 to 174 (EGEFHLLDLV…WLLLTPPPGL (74 aa)) constitute a PRC barrel domain.

It belongs to the RimM family. As to quaternary structure, binds ribosomal protein uS19.

The protein localises to the cytoplasm. Functionally, an accessory protein needed during the final step in the assembly of 30S ribosomal subunit, possibly for assembly of the head region. Essential for efficient processing of 16S rRNA. May be needed both before and after RbfA during the maturation of 16S rRNA. It has affinity for free ribosomal 30S subunits but not for 70S ribosomes. The protein is Ribosome maturation factor RimM of Synechococcus sp. (strain CC9605).